A 141-amino-acid polypeptide reads, in one-letter code: Hemoglobin subunit alpha (141 aa).

In terms of domain architecture, Globin spans Val1–Arg141. A Phosphoserine modification is found at Ser3. Lys7 and Lys11 each carry N6-succinyllysine. At Lys16 the chain carries N6-acetyllysine; alternate. Lys16 carries the post-translational modification N6-succinyllysine; alternate. Phosphotyrosine is present on Tyr24. The residue at position 35 (Ser35) is a Phosphoserine. The residue at position 40 (Lys40) is an N6-succinyllysine. At Ser49 the chain carries Phosphoserine. His58 is an O2 binding site. Position 87 (His87) interacts with heme b. At Ser102 the chain carries Phosphoserine. At Thr108 the chain carries Phosphothreonine. Ser124 bears the Phosphoserine mark. 2 positions are modified to phosphothreonine: Thr134 and Thr137. Ser138 carries the post-translational modification Phosphoserine.

This sequence belongs to the globin family. In terms of assembly, heterotetramer of two alpha chains and two beta chains. Red blood cells.

In terms of biological role, involved in oxygen transport from the lung to the various peripheral tissues. Hemopressin acts as an antagonist peptide of the cannabinoid receptor CNR1. Hemopressin-binding efficiently blocks cannabinoid receptor CNR1 and subsequent signaling. The chain is Hemoglobin subunit alpha (HBA) from Hippopotamus amphibius (Hippopotamus).